The sequence spans 261 residues: 3-hydroxyacyl-CoA dehydrogenase type-2 (261 aa).

An N-acetylalanine modification is found at A2. NAD(+) contacts are provided by S20, L22, and D41. K53 carries the post-translational modification N6-acetyllysine; alternate. Position 53 is an N6-succinyllysine; alternate (K53). NAD(+) is bound by residues D64 and V65. Position 69 is an N6-acetyllysine (K69). C91 is an NAD(+) binding site. K99 and K105 each carry N6-acetyllysine. S155 serves as a coordination point for substrate. NAD(+) is bound by residues Y168, K172, F201, and T203. Y168 functions as the Proton acceptor in the catalytic mechanism. The residue at position 212 (K212) is an N6-acetyllysine; alternate. N6-succinyllysine; alternate is present on K212.

This sequence belongs to the short-chain dehydrogenases/reductases (SDR) family. Homotetramer. Component of mitochondrial ribonuclease P, a complex composed of TRMT10C/MRPP1, HSD17B10/MRPP2 and PRORP/MRPP3. Interacts with TRMT10C/MRPP1; forming the MRPP1-MRPP2 subcomplex of the mitochondrial ribonuclease P complex. In terms of tissue distribution, ubiquitously expressed in normal tissues but is overexpressed in neurons affected in AD.

It is found in the mitochondrion. Its subcellular location is the mitochondrion matrix. The protein localises to the mitochondrion nucleoid. It carries out the reaction a (3S)-3-hydroxyacyl-CoA + NAD(+) = a 3-oxoacyl-CoA + NADH + H(+). The enzyme catalyses (2S,3S)-3-hydroxy-2-methylbutanoyl-CoA + NAD(+) = 2-methyl-3-oxobutanoyl-CoA + NADH + H(+). The catalysed reaction is testosterone + NAD(+) = androst-4-ene-3,17-dione + NADH + H(+). It catalyses the reaction 5alpha-androstane-3alpha,17beta-diol + NAD(+) = 17beta-hydroxy-5alpha-androstan-3-one + NADH + H(+). It carries out the reaction 17beta-estradiol + NAD(+) = estrone + NADH + H(+). The enzyme catalyses cholate + NAD(+) = 3alpha,12alpha-dihydroxy-7-oxo-5beta-cholanate + NADH + H(+). The catalysed reaction is (3S)-3-hydroxybutanoyl-CoA + NAD(+) = acetoacetyl-CoA + NADH + H(+). It catalyses the reaction (3S)-hydroxyoctanoyl-CoA + NAD(+) = 3-oxooctanoyl-CoA + NADH + H(+). It carries out the reaction (3S)-hydroxyhexadecanoyl-CoA + NAD(+) = 3-oxohexadecanoyl-CoA + NADH + H(+). The enzyme catalyses 17beta-hydroxy-5alpha-androstan-3-one + NAD(+) = 5alpha-androstan-3,17-dione + NADH + H(+). The catalysed reaction is 5alpha-pregnan-20beta-ol-3-one + NAD(+) = 5alpha-pregnane-3,20-dione + NADH + H(+). It catalyses the reaction 3alpha-hydroxy-5alpha-pregnan-20-one + NAD(+) = 5alpha-pregnane-3,20-dione + NADH + H(+). It carries out the reaction cortisone + NAD(+) = 17alpha-hydroxypregn-4-en-3,11,20-trione-21-al + NADH + H(+). The enzyme catalyses 11-dehydrocorticosterone + NAD(+) = pregn-4-ene-3,11,20,21-tetraone + NADH + H(+). The catalysed reaction is cortisol + NAD(+) = 11beta,17alpha-dihydroxypregn-4-ene-3,20,21-trione + NADH + H(+). It catalyses the reaction chenodeoxycholate + NAD(+) = 7-oxolithocholate + NADH + H(+). It carries out the reaction ursodeoxycholate + NAD(+) = 7-oxolithocholate + NADH + H(+). The enzyme catalyses 3beta,7beta-dihydroxy-5beta-cholan-24-oate + NAD(+) = 3beta-hydroxy-7-oxo-5beta-cholan-24-oate + NADH + H(+). It functions in the pathway amino-acid degradation; L-isoleucine degradation. Its pathway is lipid metabolism; fatty acid beta-oxidation. The protein operates within steroid metabolism. It participates in lipid metabolism; bile acid biosynthesis. Its activity is regulated as follows. The phospholipase C-like activity toward cardiolipin is inhibited by amyloid-beta peptide. Mitochondrial dehydrogenase involved in pathways of fatty acid, branched-chain amino acid and steroid metabolism. Acts as (S)-3-hydroxyacyl-CoA dehydrogenase in mitochondrial fatty acid beta-oxidation, a major degradation pathway of fatty acids. Catalyzes the third step in the beta-oxidation cycle, namely the reversible conversion of (S)-3-hydroxyacyl-CoA to 3-ketoacyl-CoA. Preferentially accepts straight medium- and short-chain acyl-CoA substrates with highest efficiency for (3S)-hydroxybutanoyl-CoA. Acts as 3-hydroxy-2-methylbutyryl-CoA dehydrogenase in branched-chain amino acid catabolic pathway. Catalyzes the oxidation of 3-hydroxy-2-methylbutanoyl-CoA into 2-methyl-3-oxobutanoyl-CoA, a step in isoleucine degradation pathway. Has hydroxysteroid dehydrogenase activity toward steroid hormones and bile acids. Catalyzes the oxidation of 3alpha-, 17beta-, 20beta- and 21-hydroxysteroids and 7alpha- and 7beta-hydroxy bile acids. Oxidizes allopregnanolone/brexanolone at the 3alpha-hydroxyl group, which is known to be critical for the activation of gamma-aminobutyric acid receptors (GABAARs) chloride channel. Has phospholipase C-like activity toward cardiolipin and its oxidized species. Likely oxidizes the 2'-hydroxyl in the head group of cardiolipin to form a ketone intermediate that undergoes nucleophilic attack by water and fragments into diacylglycerol, dihydroxyacetone and orthophosphate. Has higher affinity for cardiolipin with oxidized fatty acids and may degrade these species during the oxidative stress response to protect cells from apoptosis. By interacting with intracellular amyloid-beta, it may contribute to the neuronal dysfunction associated with Alzheimer disease (AD). Essential for structural and functional integrity of mitochondria. In terms of biological role, in addition to mitochondrial dehydrogenase activity, moonlights as a component of mitochondrial ribonuclease P, a complex that cleaves tRNA molecules in their 5'-ends. Together with TRMT10C/MRPP1, forms a subcomplex of the mitochondrial ribonuclease P, named MRPP1-MRPP2 subcomplex, which displays functions that are independent of the ribonuclease P activity. The MRPP1-MRPP2 subcomplex catalyzes the formation of N(1)-methylguanine and N(1)-methyladenine at position 9 (m1G9 and m1A9, respectively) in tRNAs; HSD17B10/MRPP2 acting as a non-catalytic subunit. The MRPP1-MRPP2 subcomplex also acts as a tRNA maturation platform: following 5'-end cleavage by the mitochondrial ribonuclease P complex, the MRPP1-MRPP2 subcomplex enhances the efficiency of 3'-processing catalyzed by ELAC2, retains the tRNA product after ELAC2 processing and presents the nascent tRNA to the mitochondrial CCA tRNA nucleotidyltransferase TRNT1 enzyme. Associates with mitochondrial DNA complexes at the nucleoids to initiate RNA processing and ribosome assembly. The sequence is that of 3-hydroxyacyl-CoA dehydrogenase type-2 (HSD17B10) from Homo sapiens (Human).